Reading from the N-terminus, the 66-residue chain is Large ribosomal subunit protein uL29 (66 aa).

It belongs to the universal ribosomal protein uL29 family. Part of the 50S ribosomal subunit.

The protein is Large ribosomal subunit protein uL29 (rpmC) of Bacillus subtilis (strain 168).